We begin with the raw amino-acid sequence, 776 residues long: Protein translocase subunit SecA 2 (776 aa).

ATP is bound by residues Gln80, 98 to 102, and Asp486; that span reads GEGKT.

Belongs to the SecA family. In terms of assembly, monomer and homodimer. Part of the essential Sec protein translocation apparatus which comprises SecA, SecYEG and auxiliary proteins SecDF. Other proteins may also be involved.

The protein localises to the cell membrane. It localises to the cytoplasm. It catalyses the reaction ATP + H2O + cellular proteinSide 1 = ADP + phosphate + cellular proteinSide 2.. In terms of biological role, part of the Sec protein translocase complex. Interacts with the SecYEG preprotein conducting channel. Has a central role in coupling the hydrolysis of ATP to the transfer of proteins into and across the cell membrane, serving as an ATP-driven molecular motor driving the stepwise translocation of polypeptide chains across the membrane. The polypeptide is Protein translocase subunit SecA 2 (Listeria monocytogenes serotype 1/2a (strain 10403S)).